Consider the following 346-residue polypeptide: SUMO-activating enzyme subunit 1 (346 aa).

Met1 is modified (N-acetylmethionine). At Val2 the chain carries N-acetylvaline; in SUMO-activating enzyme subunit 1, N-terminally processed. Ser12 is subject to Phosphoserine. An N6-acetyllysine modification is found at Lys198.

This sequence belongs to the ubiquitin-activating E1 family. As to quaternary structure, heterodimer of SAE1 and UBA2/SAE2. The heterodimer corresponds to the two domains that are encoded on a single polypeptide chain in ubiquitin-activating enzyme E1. Interacts with UBE2I. As to expression, expression level increases during S phase and drops in G2 phase (at protein level).

Its subcellular location is the nucleus. Its pathway is protein modification; protein sumoylation. The heterodimer acts as an E1 ligase for SUMO1, SUMO2, SUMO3, and probably SUMO4. It mediates ATP-dependent activation of SUMO proteins followed by formation of a thioester bond between a SUMO protein and a conserved active site cysteine residue on UBA2/SAE2. The chain is SUMO-activating enzyme subunit 1 (SAE1) from Homo sapiens (Human).